The chain runs to 510 residues: Glycerol kinase (510 aa).

T13 contributes to the ADP binding site. ATP is bound by residues T13 and T14. T13 serves as a coordination point for sn-glycerol 3-phosphate. An ADP-binding site is contributed by R17. Residues R83, E84, Y135, and D255 each contribute to the sn-glycerol 3-phosphate site. Residues R83, E84, Y135, D255, and Q256 each contribute to the glycerol site. ADP contacts are provided by T277, G321, G421, and N425. T277, G321, and G421 together coordinate ATP.

This sequence belongs to the FGGY kinase family.

The catalysed reaction is glycerol + ATP = sn-glycerol 3-phosphate + ADP + H(+). Its pathway is polyol metabolism; glycerol degradation via glycerol kinase pathway; sn-glycerol 3-phosphate from glycerol: step 1/1. In terms of biological role, key enzyme in the regulation of glycerol uptake and metabolism. Catalyzes the phosphorylation of glycerol to yield sn-glycerol 3-phosphate. The chain is Glycerol kinase from Haloarcula marismortui (strain ATCC 43049 / DSM 3752 / JCM 8966 / VKM B-1809) (Halobacterium marismortui).